We begin with the raw amino-acid sequence, 134 residues long: Interleukin-5 (134 aa).

Residues 1–19 form the signal peptide; the sequence is MRMLLHLSLLALGAAYVSA. Residues asparagine 76 and asparagine 90 are each glycosylated (N-linked (GlcNAc...) asparagine).

Belongs to the IL-5 family. As to quaternary structure, homodimer; disulfide-linked. Interacts with IL5RA. Interacts with CSF2RB.

It is found in the secreted. Homodimeric cytokine expressed predominantly by T-lymphocytes and NK cells that plays an important role in the survival, differentiation, and chemotaxis of eosinophils. Also acts on activated and resting B-cells to induce immunoglobulin production, growth, and differentiation. Mechanistically, exerts its biological effects through a receptor composed of IL5RA subunit and the cytokine receptor common subunit beta/CSF2RB. Binding to the receptor leads to activation of various kinases including LYN, SYK and JAK2 and thereby propagates signals through the RAS-MAPK and JAK-STAT5 pathways respectively. This is Interleukin-5 (IL5) from Felis catus (Cat).